The chain runs to 76 residues: Acyl carrier protein (76 aa).

A Carrier domain is found at 1-76 (MSIEERVKKI…SAIDYVQNNQ (76 aa)). At Ser-36 the chain carries O-(pantetheine 4'-phosphoryl)serine.

The protein belongs to the acyl carrier protein (ACP) family. In terms of processing, 4'-phosphopantetheine is transferred from CoA to a specific serine of apo-ACP by AcpS. This modification is essential for activity because fatty acids are bound in thioester linkage to the sulfhydryl of the prosthetic group.

Its subcellular location is the cytoplasm. It functions in the pathway lipid metabolism; fatty acid biosynthesis. Its function is as follows. Carrier of the growing fatty acid chain in fatty acid biosynthesis. This chain is Acyl carrier protein, found in Pasteurella multocida (strain Pm70).